Here is a 701-residue protein sequence, read N- to C-terminus: Ribosomal RNA large subunit methyltransferase K/L (701 aa).

A THUMP domain is found at 43 to 154 (LLYQSLMWSR…KETAHISLDL (112 aa)).

It belongs to the methyltransferase superfamily. RlmKL family.

The protein resides in the cytoplasm. It carries out the reaction guanosine(2445) in 23S rRNA + S-adenosyl-L-methionine = N(2)-methylguanosine(2445) in 23S rRNA + S-adenosyl-L-homocysteine + H(+). The catalysed reaction is guanosine(2069) in 23S rRNA + S-adenosyl-L-methionine = N(2)-methylguanosine(2069) in 23S rRNA + S-adenosyl-L-homocysteine + H(+). In terms of biological role, specifically methylates the guanine in position 2445 (m2G2445) and the guanine in position 2069 (m7G2069) of 23S rRNA. The protein is Ribosomal RNA large subunit methyltransferase K/L of Klebsiella pneumoniae (strain 342).